A 198-amino-acid chain; its full sequence is Na(+)-translocating NADH-quinone reductase subunit E (198 aa).

The next 6 membrane-spanning stretches (helical) occupy residues 11 to 31 (SIFI…FLAV), 39 to 59 (FGLG…NNLV), 77 to 97 (FLNF…LEMV), 110 to 130 (GIFL…SFMV), 140 to 160 (IVYG…LAGI), and 176 to 196 (LGIT…FSGV).

This sequence belongs to the NqrDE/RnfAE family. As to quaternary structure, composed of six subunits; NqrA, NqrB, NqrC, NqrD, NqrE and NqrF. In terms of processing, the N-terminus is blocked.

It is found in the cell inner membrane. The catalysed reaction is a ubiquinone + n Na(+)(in) + NADH + H(+) = a ubiquinol + n Na(+)(out) + NAD(+). With respect to regulation, this reaction is tightly coupled to the Na(+) pumping activity and specifically requires Na(+) for activity. Inhibited by korormicin and 2-N-heptyl-4-hydroxyquinoline N-oxide (HQNO). Functionally, NQR complex catalyzes the reduction of ubiquinone-1 to ubiquinol by two successive reactions, coupled with the transport of Na(+) ions from the cytoplasm to the periplasm. NqrA to NqrE are probably involved in the second step, the conversion of ubisemiquinone to ubiquinol. The sequence is that of Na(+)-translocating NADH-quinone reductase subunit E from Vibrio alginolyticus.